We begin with the raw amino-acid sequence, 184 residues long: uncharacterized protein (184 aa).

This sequence belongs to the eIF-2B alpha/beta/delta subunits family.

This is an uncharacterized protein from Rhodospirillum rubrum.